Here is a 458-residue protein sequence, read N- to C-terminus: Bifunctional protein GlmU (458 aa).

A pyrophosphorylase region spans residues 1-228; the sequence is MHPKLDILIL…DWEVLGVNSK (228 aa). UDP-N-acetyl-alpha-D-glucosamine-binding positions include 10–13, Lys-24, Gln-75, 80–81, 102–104, Gly-139, Glu-153, Asn-168, and Asn-226; these read LAAG, GT, and YGD. Asp-104 contributes to the Mg(2+) binding site. Residue Asn-226 participates in Mg(2+) binding. The interval 229–249 is linker; sequence AQLAELERIHQNEVAQRLLAD. Positions 250–458 are N-acetyltransferase; sequence GVTLMDPARL…KRPIKPKKEG (209 aa). Positions 332 and 350 each coordinate UDP-N-acetyl-alpha-D-glucosamine. His-362 serves as the catalytic Proton acceptor. UDP-N-acetyl-alpha-D-glucosamine is bound by residues Tyr-365 and Asn-376. Residues Ala-379, 385–386, Ser-404, Ala-422, and Arg-439 contribute to the acetyl-CoA site; that span reads NY.

The protein in the N-terminal section; belongs to the N-acetylglucosamine-1-phosphate uridyltransferase family. It in the C-terminal section; belongs to the transferase hexapeptide repeat family. Homotrimer. Requires Mg(2+) as cofactor.

It is found in the cytoplasm. It catalyses the reaction alpha-D-glucosamine 1-phosphate + acetyl-CoA = N-acetyl-alpha-D-glucosamine 1-phosphate + CoA + H(+). The enzyme catalyses N-acetyl-alpha-D-glucosamine 1-phosphate + UTP + H(+) = UDP-N-acetyl-alpha-D-glucosamine + diphosphate. Its pathway is nucleotide-sugar biosynthesis; UDP-N-acetyl-alpha-D-glucosamine biosynthesis; N-acetyl-alpha-D-glucosamine 1-phosphate from alpha-D-glucosamine 6-phosphate (route II): step 2/2. It functions in the pathway nucleotide-sugar biosynthesis; UDP-N-acetyl-alpha-D-glucosamine biosynthesis; UDP-N-acetyl-alpha-D-glucosamine from N-acetyl-alpha-D-glucosamine 1-phosphate: step 1/1. It participates in bacterial outer membrane biogenesis; LPS lipid A biosynthesis. In terms of biological role, catalyzes the last two sequential reactions in the de novo biosynthetic pathway for UDP-N-acetylglucosamine (UDP-GlcNAc). The C-terminal domain catalyzes the transfer of acetyl group from acetyl coenzyme A to glucosamine-1-phosphate (GlcN-1-P) to produce N-acetylglucosamine-1-phosphate (GlcNAc-1-P), which is converted into UDP-GlcNAc by the transfer of uridine 5-monophosphate (from uridine 5-triphosphate), a reaction catalyzed by the N-terminal domain. In Thiobacillus denitrificans (strain ATCC 25259 / T1), this protein is Bifunctional protein GlmU.